Consider the following 150-residue polypeptide: UPF0178 protein PputW619_5044 (150 aa).

It belongs to the UPF0178 family.

This chain is UPF0178 protein PputW619_5044, found in Pseudomonas putida (strain W619).